Here is a 96-residue protein sequence, read N- to C-terminus: UPF0184 protein CG14818 (96 aa).

Disordered regions lie at residues 1–28 (MSPK…LQEM) and 70–96 (IAEE…AAPK). Residues 8-21 (DPSSSGDSGNTNVQ) show a composition bias toward polar residues. Residues 21 to 77 (QEADLQEMEDVNNSLDALSCALDAVEQRTDDIMSQLRELLNSNREIRRLIAEENDNA) are a coiled coil. The span at 72-85 (EENDNAPESGDDNM) shows a compositional bias: acidic residues.

This sequence belongs to the UPF0184 (EST00098) family.

In Drosophila melanogaster (Fruit fly), this protein is UPF0184 protein CG14818.